Consider the following 229-residue polypeptide: Ribonuclease T (229 aa).

The region spanning V23–F197 is the Exonuclease domain. 4 residues coordinate Mg(2+): D26, E28, H184, and D189. Residue H184 is the Proton donor/acceptor of the active site.

This sequence belongs to the RNase T family. As to quaternary structure, homodimer. The cofactor is Mg(2+).

In terms of biological role, trims short 3' overhangs of a variety of RNA species, leaving a one or two nucleotide 3' overhang. Responsible for the end-turnover of tRNA: specifically removes the terminal AMP residue from uncharged tRNA (tRNA-C-C-A). Also appears to be involved in tRNA biosynthesis. This Haemophilus influenzae (strain PittGG) protein is Ribonuclease T.